The sequence spans 353 residues: Photosystem II protein D1 (353 aa).

Thr2 bears the N-acetylthreonine mark. Thr2 is modified (phosphothreonine). The next 3 helical transmembrane spans lie at 29 to 46 (YIGWFGVLMIPTLLTATS), 118 to 133 (HFLLGVACYMGREWEL), and 142 to 156 (WIAVAYSAPVAAATA). Chlorophyll a is bound at residue His118. Tyr126 is a pheophytin a binding site. Positions 170 and 189 each coordinate [CaMn4O5] cluster. A helical membrane pass occupies residues 197–218 (FHMLGVAGVFGGSLFSAMHGSL). His198 provides a ligand contact to chlorophyll a. Residues His215 and 264–265 (SF) each bind a quinone. His215 provides a ligand contact to Fe cation. Position 272 (His272) interacts with Fe cation. Residues 274–288 (FLTAWPVVGIWFTAL) form a helical membrane-spanning segment. [CaMn4O5] cluster contacts are provided by His332, Glu333, Asp342, and Ala344. Residues 345-353 (VVEAPSTNG) constitute a propeptide that is removed on maturation.

This sequence belongs to the reaction center PufL/M/PsbA/D family. As to quaternary structure, PSII is composed of 1 copy each of membrane proteins PsbA, PsbB, PsbC, PsbD, PsbE, PsbF, PsbH, PsbI, PsbJ, PsbK, PsbL, PsbM, PsbT, PsbX, PsbY, PsbZ, Psb30/Ycf12, at least 3 peripheral proteins of the oxygen-evolving complex and a large number of cofactors. It forms dimeric complexes. It depends on The D1/D2 heterodimer binds P680, chlorophylls that are the primary electron donor of PSII, and subsequent electron acceptors. It shares a non-heme iron and each subunit binds pheophytin, quinone, additional chlorophylls, carotenoids and lipids. D1 provides most of the ligands for the Mn4-Ca-O5 cluster of the oxygen-evolving complex (OEC). There is also a Cl(-1) ion associated with D1 and D2, which is required for oxygen evolution. The PSII complex binds additional chlorophylls, carotenoids and specific lipids. as a cofactor. Post-translationally, tyr-161 forms a radical intermediate that is referred to as redox-active TyrZ, YZ or Y-Z. In terms of processing, C-terminally processed by CTPA; processing is essential to allow assembly of the oxygen-evolving complex and thus photosynthetic growth.

Its subcellular location is the plastid. It localises to the chloroplast thylakoid membrane. It catalyses the reaction 2 a plastoquinone + 4 hnu + 2 H2O = 2 a plastoquinol + O2. In terms of biological role, photosystem II (PSII) is a light-driven water:plastoquinone oxidoreductase that uses light energy to abstract electrons from H(2)O, generating O(2) and a proton gradient subsequently used for ATP formation. It consists of a core antenna complex that captures photons, and an electron transfer chain that converts photonic excitation into a charge separation. The D1/D2 (PsbA/PsbD) reaction center heterodimer binds P680, the primary electron donor of PSII as well as several subsequent electron acceptors. The sequence is that of Photosystem II protein D1 from Aethionema cordifolium (Lebanon stonecress).